The primary structure comprises 117 residues: Small ribosomal subunit protein bS6 (117 aa).

The tract at residues 96-117 is disordered; it reads KEAAAPAPKAAPVESAPAVEAE. Low complexity predominate over residues 99-117; it reads AAPAPKAAPVESAPAVEAE.

This sequence belongs to the bacterial ribosomal protein bS6 family.

Binds together with bS18 to 16S ribosomal RNA. This Geobacter sulfurreducens (strain ATCC 51573 / DSM 12127 / PCA) protein is Small ribosomal subunit protein bS6.